Here is a 456-residue protein sequence, read N- to C-terminus: Protein shifted (456 aa).

The signal sequence occupies residues 1–30 (MTHQGIGCLVKWLYLVLIVHTLLCIGQLEC). Residues 34–112 (HHNRNNNNNN…GGGGSRHNRN (79 aa)) form a disordered region. The segment covering 44 to 55 (RRADSSSSEEGH) has biased composition (basic and acidic residues). Asn57 is a glycosylation site (N-linked (GlcNAc...) asparagine). Residues 77 to 87 (HQPRRGQRKKQ) are compositionally biased toward basic residues. Over residues 88–107 (QGGGGGGSGGGGGNGGGGGS) the composition is skewed to gly residues. One can recognise a WIF domain in the interval 119 to 261 (LWINEQQLKM…PIRLNFKKEC (143 aa)). Residues Asn173, Asn217, and Asn227 are each glycosylated (N-linked (GlcNAc...) asparagine). Intrachain disulfides connect Cys224-Cys261, Cys283-Cys293, Cys287-Cys299, Cys301-Cys310, Cys315-Cys325, Cys319-Cys331, Cys333-Cys342, Cys347-Cys357, Cys351-Cys363, Cys365-Cys374, Cys379-Cys389, Cys383-Cys395, Cys397-Cys406, Cys416-Cys423, Cys418-Cys429, and Cys431-Cys440. 5 consecutive EGF-like domains span residues 279–311 (TLQECSLKCGKNGYCNEHHICKCNVGYTGQYCE), 315–342 (CFPQCLNGGNCTAPSVCTCPEGYQGTQC), 343–375 (EGGICKDKCLNGGKCIQKDKCQCSKGYYGLRCE), 376–407 (YSKCVIPCKNEGRCIGNNLCRCPNGLRGDHCE), and 412–441 (QRSICKCRNGTCVSHKHCKCHPGFYGRHCN). Asn324 is a glycosylation site (N-linked (GlcNAc...) asparagine). Asn420 is a glycosylation site (N-linked (GlcNAc...) asparagine).

In terms of assembly, interacts with hh. As to expression, at the blastoderm stage, it is ubiquitously expressed. As embryogenesis continues, it is expressed in the epidermis and central nervous system, this expression being segmentally modulated. Also highly expressed at the foregut and hindgut throughout embryogenesis. In third instar wing imaginal disks, it is highly expressed in the most anterior and posterior parts of the disk and weakly expressed at the antero/posterior (A/P) compartment border. In the leg disks and the antenna part of the eye-antennal imaginal disk it is also weakly expressed at the A/P compartment border. Weakly expressed in the morphogenetic furrow in the eye primordium.

The protein resides in the secreted. The protein localises to the extracellular space. It localises to the extracellular matrix. Required for normal accumulation and movement of lipid-modified hedgehog (hh) morphogen. May act by stabilizing the interaction between heparan sulfate proteoglycans (HSPGs) and hh, HSPGs being required for diffusion of hh morphogen. Not involved in wingless (wg) morphogen movement, suggesting that it may provide HSPG specificity for Hh. The chain is Protein shifted (shf) from Drosophila melanogaster (Fruit fly).